Consider the following 312-residue polypeptide: ADP-L-glycero-D-manno-heptose-6-epimerase (312 aa).

Residues 10–11 (FI), 31–32 (DN), K38, K53, 75–79 (EGACS), and N92 contribute to the NADP(+) site. The active-site Proton acceptor is Y140. K144 is a binding site for NADP(+). N169 serves as a coordination point for substrate. NADP(+)-binding residues include V170 and K178. Catalysis depends on K178, which acts as the Proton acceptor. Substrate is bound by residues S180, H187, 201–204 (FAGS), R209, and Y274.

It belongs to the NAD(P)-dependent epimerase/dehydratase family. HldD subfamily. In terms of assembly, homopentamer. It depends on NADP(+) as a cofactor.

The catalysed reaction is ADP-D-glycero-beta-D-manno-heptose = ADP-L-glycero-beta-D-manno-heptose. The protein operates within nucleotide-sugar biosynthesis; ADP-L-glycero-beta-D-manno-heptose biosynthesis; ADP-L-glycero-beta-D-manno-heptose from D-glycero-beta-D-manno-heptose 7-phosphate: step 4/4. It functions in the pathway bacterial outer membrane biogenesis; LPS core biosynthesis. Its function is as follows. Catalyzes the interconversion between ADP-D-glycero-beta-D-manno-heptose and ADP-L-glycero-beta-D-manno-heptose via an epimerization at carbon 6 of the heptose. In Photorhabdus laumondii subsp. laumondii (strain DSM 15139 / CIP 105565 / TT01) (Photorhabdus luminescens subsp. laumondii), this protein is ADP-L-glycero-D-manno-heptose-6-epimerase.